We begin with the raw amino-acid sequence, 122 residues long: Holo-[acyl-carrier-protein] synthase (122 aa).

Mg(2+)-binding residues include aspartate 8 and glutamate 56.

The protein belongs to the P-Pant transferase superfamily. AcpS family. Requires Mg(2+) as cofactor.

The protein localises to the cytoplasm. It catalyses the reaction apo-[ACP] + CoA = holo-[ACP] + adenosine 3',5'-bisphosphate + H(+). Its function is as follows. Transfers the 4'-phosphopantetheine moiety from coenzyme A to a Ser of acyl-carrier-protein. This is Holo-[acyl-carrier-protein] synthase from Alkaliphilus metalliredigens (strain QYMF).